Here is a 337-residue protein sequence, read N- to C-terminus: 2-oxoglutarate-dependent dioxygenase frbA (337 aa).

The 116-residue stretch at 175-290 (CSAELRLNHY…RHSLAYFGKP (116 aa)) folds into the Fe2OG dioxygenase domain. 3 residues coordinate Fe cation: His-202, Asp-204, and His-262. Arg-281 contacts 2-oxoglutarate.

The protein belongs to the iron/ascorbate-dependent oxidoreductase family. It depends on Fe(2+) as a cofactor.

It participates in antifungal biosynthesis. 2-oxoglutarate-dependent dioxygenase; part of the gene cluster that mediates the biosynthesis of the antifungal antibiotic FR901469, an inhibitor of beta-1,3-glucansynthase, exerting antifungal activity against the pathogenes Candida albicans and Aspergillus fumigatus. FR901469 is a cyclic depsipeptide containing 12 amino acid residues and a fatty acid chain. The NRPS frbI contains 12 modules responsible for the formation of the depsipeptide backbone which is denoted as Acyl-Thr-Ala-Tyr-Val-4OHPro-Thr-Thr-3OHPro-threo3OHGln-Gly-Thr-Orn-OH (C71H116N14O23). The PKS frbB is probably involved in the production of the hydrocarbon chain, and the acyl-CoA ligase frbC might be involved in the transport of the chain to the peptide ptoduct of frbI. Because FR901469 contains 3 hydroxylated amino acid residues, the 3 oxygenases frbA, frbH, and frbJ might be participating in amino acid hydroxylation. As no thioesterase domains were detected in frbI or frbB, the thioesterases frbD and frbE may instead release and cyclize the products of the NRPS and PKS, respectively. The protein is 2-oxoglutarate-dependent dioxygenase frbA of Dothideomycetidae sp. (strain 11243) (Fungal sp. (strain No.11243)).